The following is a 38-amino-acid chain: Large ribosomal subunit protein bL36 (38 aa).

This sequence belongs to the bacterial ribosomal protein bL36 family.

The protein is Large ribosomal subunit protein bL36 of Phytoplasma mali (strain AT).